A 236-amino-acid chain; its full sequence is Purine nucleoside phosphorylase CA_C1699 (236 aa).

His62, Cys97, and His114 together coordinate Zn(2+).

The protein belongs to the purine nucleoside phosphorylase YfiH/LACC1 family. In terms of assembly, homodimer. It depends on Cu(2+) as a cofactor. Requires Zn(2+) as cofactor.

The enzyme catalyses adenosine + phosphate = alpha-D-ribose 1-phosphate + adenine. It carries out the reaction S-methyl-5'-thioadenosine + phosphate = 5-(methylsulfanyl)-alpha-D-ribose 1-phosphate + adenine. It catalyses the reaction inosine + phosphate = alpha-D-ribose 1-phosphate + hypoxanthine. The catalysed reaction is adenosine + H2O + H(+) = inosine + NH4(+). Purine nucleoside enzyme that catalyzes the phosphorolysis of adenosine and inosine nucleosides, yielding D-ribose 1-phosphate and the respective free bases, adenine and hypoxanthine. Also catalyzes the phosphorolysis of S-methyl-5'-thioadenosine into adenine and S-methyl-5-thio-alpha-D-ribose 1-phosphate. Also has adenosine deaminase activity. The protein is Purine nucleoside phosphorylase CA_C1699 of Clostridium acetobutylicum (strain ATCC 824 / DSM 792 / JCM 1419 / IAM 19013 / LMG 5710 / NBRC 13948 / NRRL B-527 / VKM B-1787 / 2291 / W).